The primary structure comprises 540 residues: BTB/POZ domain-containing protein 6-A (540 aa).

In terms of domain architecture, BTB spans 138-208 (ADVHFIVGPP…MYSDEIELAP (71 aa)).

Interacts with cul3. Interacts (via BTB domain) with zbtb16/plzf. In terms of tissue distribution, expressed in the developing central nervous system.

The protein localises to the cytoplasm. It localises to the nucleus. Adapter protein for the cul3 E3 ubiquitin-protein ligase complex. Promotes the export of zbtb16/plzf from the nucleus to the cytoplasm and targets zbtb16/plzf for ubiquitination and degradation. Up-regulates neurog1 expression and antagonizes zbtb16/plzf, to promote neurogenesis. This Danio rerio (Zebrafish) protein is BTB/POZ domain-containing protein 6-A (btbd6a).